A 711-amino-acid chain; its full sequence is Ent-copalyl diphosphate synthase 1 (711 aa).

K145 lines the substrate pocket. D277 and D279 together coordinate Mg(2+). Residues 277-280 carry the DXDD motif motif; the sequence is DIDD. K364 provides a ligand contact to substrate.

This sequence belongs to the terpene synthase family. Tpsc subfamily. Mg(2+) serves as cofactor.

It carries out the reaction (2E,6E,10E)-geranylgeranyl diphosphate = ent-copalyl diphosphate. Its pathway is secondary metabolite biosynthesis; terpenoid biosynthesis. Its function is as follows. Involved in the biosynthesis of ent-kaurene diterpenoids natural products such as oridonin, miltiradiene, eriocalyxin B and nezukol, known to exhibit antitumor, anti-inflammatory and antibacterial activities. Catalyzes the conversion of (2E,6E,10E)-geranylgeranyl diphosphate (GGPP) to ent-copalyl diphosphate (ent-CPP). This is Ent-copalyl diphosphate synthase 1 from Isodon japonicus (Scutellaria japonica).